The primary structure comprises 224 residues: MVNLGNDWDELLKEEFEKDYYLNLRKFLIEEYKTRQIFPNMHNIYEALKHTSYKDTKVLILGQDPYHGDNQAHGLAFSVQPQVKTPPSLLNMYKELKDDLGCFIPNNGYLMPWADQGVLLLNTALTVRAHEANSHKNKGWEIFTDRVISILSEREDPVIFVLWGSNARKKVELIDTSKHYILEAPHPSPLSASKGFFGCKHFSKINEILKKLGKEPINWQIENI.

Residue Asp-64 is the Proton acceptor of the active site.

It belongs to the uracil-DNA glycosylase (UDG) superfamily. UNG family.

The protein localises to the cytoplasm. It catalyses the reaction Hydrolyzes single-stranded DNA or mismatched double-stranded DNA and polynucleotides, releasing free uracil.. In terms of biological role, excises uracil residues from the DNA which can arise as a result of misincorporation of dUMP residues by DNA polymerase or due to deamination of cytosine. In Clostridioides difficile (strain 630) (Peptoclostridium difficile), this protein is Uracil-DNA glycosylase.